A 78-amino-acid polypeptide reads, in one-letter code: Pigment-dispersing hormone peptides (78 aa).

The first 22 residues, 1–22, serve as a signal peptide directing secretion; that stretch reads MRSAVIVTMLVVVALAALLTQG. Residue Ala-75 is modified to Alanine amide.

Belongs to the arthropod PDH family. In terms of tissue distribution, expressed in eyestalk tissue and cerebral ganglia.

The protein localises to the secreted. In terms of biological role, the pigment-dispersing hormone causes the migration of the distal retinal pigment into the proximal end of the pigment chromatophore cells and thus decreases the amount of light entering the retinulas. May also function as a neurotransmitter and/or neuromodulator. The protein is Pigment-dispersing hormone peptides of Carcinus maenas (Common shore crab).